A 448-amino-acid polypeptide reads, in one-letter code: tRNA modification GTPase MnmE (448 aa).

Arginine 24, glutamate 81, and lysine 120 together coordinate (6S)-5-formyl-5,6,7,8-tetrahydrofolate. One can recognise a TrmE-type G domain in the interval 216-373 (GLNVVLVGAP…LKRTLLREAG (158 aa)). Asparagine 226 contacts K(+). GTP is bound by residues 226 to 231 (NVGKSS), 245 to 251 (TDIAGTT), and 270 to 273 (DTAG). Serine 230 provides a ligand contact to Mg(2+). 3 residues coordinate K(+): threonine 245, isoleucine 247, and threonine 250. Threonine 251 contacts Mg(2+). Lysine 448 serves as a coordination point for (6S)-5-formyl-5,6,7,8-tetrahydrofolate.

This sequence belongs to the TRAFAC class TrmE-Era-EngA-EngB-Septin-like GTPase superfamily. TrmE GTPase family. As to quaternary structure, homodimer. Heterotetramer of two MnmE and two MnmG subunits. K(+) is required as a cofactor.

Its subcellular location is the cytoplasm. Its function is as follows. Exhibits a very high intrinsic GTPase hydrolysis rate. Involved in the addition of a carboxymethylaminomethyl (cmnm) group at the wobble position (U34) of certain tRNAs, forming tRNA-cmnm(5)s(2)U34. The sequence is that of tRNA modification GTPase MnmE from Neisseria meningitidis serogroup A / serotype 4A (strain DSM 15465 / Z2491).